The primary structure comprises 283 residues: E3 ubiquitin-protein ligase MARCHF5 (283 aa).

An RING-CH-type zinc finger spans residues 9 to 78 (VQQMLDRSCW…PQCNAEYLIV (70 aa)). Zn(2+) contacts are provided by Cys-17, Cys-20, Cys-36, Cys-38, His-46, Cys-49, Cys-68, and Cys-71. 4 helical membrane passes run 102 to 122 (FAAAGIMVGSIYWTAVTYGAV), 142 to 162 (PLFLLIGLPTIPVVLILGKMI), 212 to 232 (ILCGALVFPTIATIVGKLMFS), and 241 to 261 (TILGGIAFVAIKGAFKVYFKQ).

It is found in the mitochondrion outer membrane. The protein localises to the endoplasmic reticulum membrane. The enzyme catalyses S-ubiquitinyl-[E2 ubiquitin-conjugating enzyme]-L-cysteine + [acceptor protein]-L-lysine = [E2 ubiquitin-conjugating enzyme]-L-cysteine + N(6)-ubiquitinyl-[acceptor protein]-L-lysine.. It participates in protein modification; protein ubiquitination. Functionally, mitochondrial E3 ubiquitin-protein ligase that plays a crucial role in the control of mitochondrial morphology by acting as a positive regulator of mitochondrial fission. May play a role in the prevention of cell senescence acting as a regulator of mitochondrial quality control. This is E3 ubiquitin-protein ligase MARCHF5 (marchf5) from Xenopus laevis (African clawed frog).